The primary structure comprises 259 residues: Light-harvesting complex stress-related protein 3.1, chloroplastic (259 aa).

The transit peptide at 1 to 45 (MLANVVSRKASGLRQTPARATVAVKSVSGRRTTAAEPQTAAPVAA) directs the protein to the chloroplast. Tyr-51 serves as a coordination point for chlorophyll b. Residues Phe-66, Glu-87, and His-90 each contribute to the chlorophyll a site. Arg-92 is a binding site for chlorophyll b. The helical transmembrane segment at 93–113 (VAMLAALGFVVGEQLQDFPLF) threads the bilayer. Residue Gln-130 coordinates chlorophyll a. The chain crosses the membrane as a helical span at residues 137–157 (EPLLIAIGVAESYRVAVGWAT). 2 residues coordinate chlorophyll b: Glu-147 and Arg-150. Lys-196, Glu-197, Asn-200, Arg-202, and Gln-214 together coordinate chlorophyll a. The chain crosses the membrane as a helical span at residues 203–223 (LAMIAIAAFVAQELVEQTEIF).

Belongs to the light-harvesting chlorophyll a/b-binding (LHC) protein family. In terms of assembly, interacts with the photosystem II-light-harvesting complex II (PSII-LHCII) supercomplex to form PSII-LHCII-LHCSR3 supercomplex.

Its subcellular location is the plastid. It localises to the chloroplast thylakoid membrane. In terms of biological role, required for non-photochemical quenching (NPQ), a mechanism that converts and dissipates the harmful excess absorbed light energy into heat and protect the photosynthetic apparatus from photo-oxidative damage. NPQ includes dissipating excess light energy to heat (qE) and the reversible coupling of LHCII to photosystems (state transitions or qT), which are considered separate NPQ mechanisms. Is responsible for most of the excess light energy to heat dissipation (qE), also known as energy-dependent chlorophyll fluorescence quenching activity of chlorophyll excited states. Involved in a de-coupling and re-coupling of energy transfer to photosystem II (PSII) during qT. Binds chlorophyll a and b. Is able to sense luminal acidification of the thylakoid membranes, which occurs along with elevated electron flow caused by excess light. Establishes interactions with photosystem II (PSII) antenna components upon lumen acidification, and protonation of lumen-exposed, negatively charged residues both in LHCSR3 and in PSII antenna components. Mediates excitation energy transfer from light-harvesting complex II (LHCII) to photosystem I (PSI), rather than photosystem II (PSII), at low pH, which mimics the acidified lumen of the thylakoid membranes in high light-exposed chloroplasts. Activates PSI-dependent fluorescence quenching in addition to dissipating excitation energy in LHCII to avoid photooxidative stress under excess light. Contributes with PGRL1 to the regulation of electron flow upstream of photosystem I (PSI), and limits the accumulation of electrons on the PSI acceptor side, thus avoiding PSI photoinhibition. The polypeptide is Light-harvesting complex stress-related protein 3.1, chloroplastic (Chlamydomonas reinhardtii (Chlamydomonas smithii)).